Consider the following 512-residue polypeptide: Maturase K (512 aa).

Belongs to the intron maturase 2 family. MatK subfamily.

The protein localises to the plastid. It localises to the chloroplast. In terms of biological role, usually encoded in the trnK tRNA gene intron. Probably assists in splicing its own and other chloroplast group II introns. This is Maturase K from Piper cenocladum (Ant piper).